The chain runs to 253 residues: Sulfate transporter CysZ (253 aa).

4 consecutive transmembrane segments (helical) span residues 27–47 (FVLL…YLAV), 71–91 (ILWP…FTVV), 150–170 (LFIL…WLLF), and 211–231 (IVYV…AAVA).

Belongs to the CysZ family.

The protein localises to the cell inner membrane. Its function is as follows. High affinity, high specificity proton-dependent sulfate transporter, which mediates sulfate uptake. Provides the sulfur source for the cysteine synthesis pathway. This chain is Sulfate transporter CysZ, found in Pseudomonas syringae pv. tomato (strain ATCC BAA-871 / DC3000).